The primary structure comprises 156 residues: Acyl carrier protein, mitochondrial (156 aa).

Residues 1–68 constitute a mitochondrion transit peptide; sequence MASRVLSAYV…GRVTQLCRQY (68 aa). The 76-residue stretch at 77–152 folds into the Carrier domain; sequence EGIQDRVLYV…EIVDYIADKK (76 aa). Lys88 is modified (N6-acetyllysine). Ser112 bears the O-(pantetheine 4'-phosphoryl)serine mark.

It belongs to the acyl carrier protein (ACP) family. In terms of assembly, mammalian complex I is composed of 45 different subunits. Interacts with ETFRF1. Identified in a complex composed of MALSU1, MIEF1 upstream open reading frame protein and NDUFAB1; within the trimeric complex, MIEF1 upstream open reading frame protein functions as a bridging scaffold that interacts with MALSU1 on one side, and with NDUFAB1 on the other side. The complex interacts with the mitochondrial large ribosomal subunit. Interacts with alpha-1-microglobulin chain; this interaction is required for the maintenance of mitochondrial redox homeostasis. Component of the mitochondrial core iron-sulfur cluster (ISC) complex composed of NFS1, LYRM4, NDUFAB1, ISCU, FXN, and FDX2; this complex is a heterohexamer containing two copies of each monomer. Component of the cyteine desulfurase complex composed of NFS1, LYRM4 and NDUFAB1; this complex contributes to the stability and cysteine desulfurase activity of NFS1. Post-translationally, phosphopantetheinylation at Ser-112 is essential for interactions with LYR motif-containing proteins.

Its subcellular location is the mitochondrion. In terms of biological role, carrier of the growing fatty acid chain in fatty acid biosynthesis. Accessory and non-catalytic subunit of the mitochondrial membrane respiratory chain NADH dehydrogenase (Complex I), which functions in the transfer of electrons from NADH to the respiratory chain. Accessory protein, of the core iron-sulfur cluster (ISC) assembly complex, that regulates, in association with LYRM4, the stability and the cysteine desulfurase activity of NFS1 and participates in the [2Fe-2S] clusters assembly on the scaffolding protein ISCU. The core iron-sulfur cluster (ISC) assembly complex is involved in the de novo synthesis of a [2Fe-2S] cluster, the first step of the mitochondrial iron-sulfur protein biogenesis. This process is initiated by the cysteine desulfurase complex (NFS1:LYRM4:NDUFAB1) that produces persulfide which is delivered on the scaffold protein ISCU in a FXN-dependent manner. Then this complex is stabilized by FDX2 which provides reducing equivalents to accomplish the [2Fe-2S] cluster assembly. Finally, the [2Fe-2S] cluster is transferred from ISCU to chaperone proteins, including HSCB, HSPA9 and GLRX5. In Pongo pygmaeus (Bornean orangutan), this protein is Acyl carrier protein, mitochondrial.